The primary structure comprises 245 residues: Neurovirulence factor ICP34.5 (245 aa).

Positions 1–15 (MARRRRRHRGPRRPR) are enriched in basic residues. Positions 1 to 17 (MARRRRRHRGPRRPRPP) are required for nucleolar localization. Disordered stretches follow at residues 1 to 122 (MARR…PFRL) and 143 to 172 (RRAGGEGAPKPPATPATPATPATPATPATP). A compositionally biased stretch (polar residues) spans 25-36 (TAQSQVTSTPNS). Over residues 67 to 77 (ASDDDDDDDWP) the composition is skewed to acidic residues. Composition is skewed to pro residues over residues 78–87 (DSPPPEPAPE) and 113–122 (SHPPSRPFRL). Positions 122 to 131 (LPPRLALRLR) match the Nuclear export signal motif. 6 tandem repeats follow at residues 155–157 (ATP), 158–160 (ATP), 161–163 (ATP), 164–166 (ATP), 167–169 (ATP), and 170–172 (ATP). A 6 X 3 AA tandem repeats of A-T-P region spans residues 155–172 (ATPATPATPATPATPATP). Low complexity predominate over residues 158–172 (ATPATPATPATPATP). The binding to PP1CA stretch occupies residues 172–185 (PARVRFSPHVRVRH). The interaction with host PPP1CA stretch occupies residues 172 to 185 (PARVRFSPHVRVRH). The interval 187–245 (VVWASAARLARRGSWARERADRARFRRRVAEAEAVIGPCLGPEARARALARGAGPANSV) is important for interferon resistance. The Bipartite nuclear localization signal motif lies at 197 to 215 (RRGSWARERADRARFRRRV). Residues 215–230 (VAEAEAVIGPCLGPEA) form an interaction with host EIF2S1/EIF-2ALPHA region.

Belongs to the PPP1R15 family. As to quaternary structure, interacts with host PPP1CA to form a high-molecular-weight complex that dephosphorylates EIF2S1/eIF-2alpha. Interacts with host EIF2S1/eIF-2alpha; this interaction is crucial for the specific dephosphorylation of EIF2S1/eIF-2alpha by PPP1CA. Binds to proliferating cell nuclear antigen (PCNA), which may release host cells from growth arrest and facilitate viral replication. Interacts (via N-terminus) with host C1QBP and PRKCA. Interacts with protein UL31. Interacts with host TBK1. Interacts with host STING/TMEM173; this interaction inhibits the intracellular DNA sensing pathway. Interacts with host BECN1; this interaction modulates host autophagy.

The protein resides in the host cytoplasm. It localises to the host nucleus. It is found in the host nucleolus. The protein localises to the virion. Inhibits the establishment of the immune response and of the integrated stress response (ISR) in the infected cell. Plays essential roles in viral nuclear egress to mediate capsid transit across the nuclear membrane. Facilitates nuclear egress cooperatively with host C1QBP and protein kinase C/PKC to induce lamin A/C phosphorylation and subsequent reorganization. In turn, lamina disassembles and nuclear egress occurs. Recruits the serine/threonine protein phosphatase PPP1CA/PP1-alpha to dephosphorylate the translation initiation factor EIF2S1/eIF-2alpha, thereby couteracting the host shutoff of protein synthesis involving double-stranded RNA-dependent protein kinase EIF2AK2/PKR. In turn, controls host IRF3 activation and subsequently inhibits host interferon response. Controls the DNA sensing pathway by interacting with and inhibiting host STING/TMEM173. Also down-modulates the host MHC class II proteins cell surface expression. Acts as a neurovirulence factor that has a profound effect on the growth of the virus in central nervous system tissue, by interacting with host BECN1 and thereby antagonizing the host autophagy response. This chain is Neurovirulence factor ICP34.5 (RL1), found in Homo sapiens (Human).